Reading from the N-terminus, the 409-residue chain is Putative competence-damage inducible protein (409 aa).

Belongs to the CinA family.

The sequence is that of Putative competence-damage inducible protein from Clostridium tetani (strain Massachusetts / E88).